A 341-amino-acid chain; its full sequence is Trimethylamine N-oxide transport system ATP-binding protein TmoW (341 aa).

Positions Ile-6–Thr-265 constitute an ABC transporter domain. Gly-61–Ser-68 lines the ATP pocket.

It belongs to the ABC transporter superfamily. As to quaternary structure, the complex is probably composed of two ATP-binding proteins (TmoW), two transmembrane proteins (TmoV) and a solute-binding protein (TmoX).

The protein resides in the cell inner membrane. It carries out the reaction a quaternary ammonium(out) + ATP + H2O = a quaternary ammonium(in) + ADP + phosphate + H(+). Functionally, part of the ABC transporter complex TmoXWV involved in trimethylamine N-oxide (TMAO) import. Responsible for energy coupling to the transport system. The sequence is that of Trimethylamine N-oxide transport system ATP-binding protein TmoW from Pelagibacter ubique (strain HTCC1062).